Here is a 231-residue protein sequence, read N- to C-terminus: Large ribosomal subunit protein uL1 (231 aa).

Belongs to the universal ribosomal protein uL1 family. As to quaternary structure, part of the 50S ribosomal subunit.

Functionally, binds directly to 23S rRNA. The L1 stalk is quite mobile in the ribosome, and is involved in E site tRNA release. Its function is as follows. Protein L1 is also a translational repressor protein, it controls the translation of the L11 operon by binding to its mRNA. The protein is Large ribosomal subunit protein uL1 of Nitrosomonas eutropha (strain DSM 101675 / C91 / Nm57).